The sequence spans 177 residues: Large ribosomal subunit protein uL6 (177 aa).

Belongs to the universal ribosomal protein uL6 family. As to quaternary structure, part of the 50S ribosomal subunit.

Its function is as follows. This protein binds to the 23S rRNA, and is important in its secondary structure. It is located near the subunit interface in the base of the L7/L12 stalk, and near the tRNA binding site of the peptidyltransferase center. This is Large ribosomal subunit protein uL6 from Vibrio cholerae serotype O1 (strain ATCC 39541 / Classical Ogawa 395 / O395).